A 1293-amino-acid chain; its full sequence is DNA-directed RNA polymerase subunit beta' (1293 aa).

Residues Cys60, Cys62, Cys75, and Cys78 each coordinate Zn(2+). Mg(2+) is bound by residues Asp535, Asp537, and Asp539. Residues Cys877, Cys953, Cys960, and Cys963 each coordinate Zn(2+).

The protein belongs to the RNA polymerase beta' chain family. The RNAP catalytic core consists of 2 alpha, 1 beta, 1 beta' and 1 omega subunit. When a sigma factor is associated with the core the holoenzyme is formed, which can initiate transcription. Mg(2+) is required as a cofactor. It depends on Zn(2+) as a cofactor.

The enzyme catalyses RNA(n) + a ribonucleoside 5'-triphosphate = RNA(n+1) + diphosphate. Functionally, DNA-dependent RNA polymerase catalyzes the transcription of DNA into RNA using the four ribonucleoside triphosphates as substrates. The polypeptide is DNA-directed RNA polymerase subunit beta' (Kineococcus radiotolerans (strain ATCC BAA-149 / DSM 14245 / SRS30216)).